A 406-amino-acid polypeptide reads, in one-letter code: Olfactomedin-like protein 3 (406 aa).

Positions 1 to 21 (MGPHTQLLILLLLSWLGPLQG) are cleaved as a signal peptide. A coiled-coil region spans residues 22-101 (QQHHLVEYME…REVDYLETQN (80 aa)). An Olfactomedin-like domain is found at 134–401 (DCGYTISQVR…QIVYKLEMRK (268 aa)). Residues cysteine 135 and cysteine 328 are joined by a disulfide bond. The N-linked (GlcNAc...) asparagine glycan is linked to asparagine 248.

The protein belongs to the OLFML3 family.

Its subcellular location is the secreted. In terms of biological role, secreted scaffold protein that plays an essential role in dorsoventral patterning during early development. Stabilizes axial formation by restricting chordin (CHRD) activity on the dorsal side. Acts by facilitating the association between the tolloid proteases and their substrate chordin (CHRD), leading to enhance chordin (CHRD) degradation. May have matrix-related function involved in placental and embryonic development, or play a similar role in other physiological processes. This chain is Olfactomedin-like protein 3 (OLFML3), found in Bos taurus (Bovine).